A 384-amino-acid chain; its full sequence is Cytochrome b (384 aa).

A run of 4 helical transmembrane segments spans residues 32 to 52, 76 to 98, 113 to 133, and 179 to 199; these read LGSL…FLAM, WLIR…IHIG, VWTV…LGYC, and FFTF…MHLM. Heme b contacts are provided by His82 and His96. Heme b is bound by residues His183 and His197. His202 is a binding site for a ubiquinone. 4 helical membrane passes run 225–245, 289–309, 321–341, and 348–368; these read FIFK…LFVF, LGGV…PITD, LSKF…KLGE, and FILM…ILVP.

This sequence belongs to the cytochrome b family. As to quaternary structure, fungal cytochrome b-c1 complex contains 10 subunits; 3 respiratory subunits, 2 core proteins and 5 low-molecular weight proteins. Cytochrome b-c1 complex is a homodimer. Requires heme b as cofactor.

Its subcellular location is the mitochondrion inner membrane. In terms of biological role, component of the ubiquinol-cytochrome c reductase complex (complex III or cytochrome b-c1 complex) that is part of the mitochondrial respiratory chain. The b-c1 complex mediates electron transfer from ubiquinol to cytochrome c. Contributes to the generation of a proton gradient across the mitochondrial membrane that is then used for ATP synthesis. This Eremothecium gossypii (strain ATCC 10895 / CBS 109.51 / FGSC 9923 / NRRL Y-1056) (Yeast) protein is Cytochrome b (COB).